The primary structure comprises 195 residues: Imidazoleglycerol-phosphate dehydratase (195 aa).

The protein belongs to the imidazoleglycerol-phosphate dehydratase family.

The protein resides in the cytoplasm. The catalysed reaction is D-erythro-1-(imidazol-4-yl)glycerol 3-phosphate = 3-(imidazol-4-yl)-2-oxopropyl phosphate + H2O. The protein operates within amino-acid biosynthesis; L-histidine biosynthesis; L-histidine from 5-phospho-alpha-D-ribose 1-diphosphate: step 6/9. The sequence is that of Imidazoleglycerol-phosphate dehydratase from Aminomonas aminovorus.